The following is a 476-amino-acid chain: Bifunctional protein HldE (476 aa).

Residues 1–318 (MKPILPDYNN…AEAIHGSRDT (318 aa)) are ribokinase. 195–198 (NMSE) contributes to the ATP binding site. Asp-264 is an active-site residue. The segment at 344-476 (MTNGCFDILH…IIDAIKGGRG (133 aa)) is cytidylyltransferase.

The protein in the N-terminal section; belongs to the carbohydrate kinase PfkB family. In the C-terminal section; belongs to the cytidylyltransferase family. In terms of assembly, homodimer.

It carries out the reaction D-glycero-beta-D-manno-heptose 7-phosphate + ATP = D-glycero-beta-D-manno-heptose 1,7-bisphosphate + ADP + H(+). The catalysed reaction is D-glycero-beta-D-manno-heptose 1-phosphate + ATP + H(+) = ADP-D-glycero-beta-D-manno-heptose + diphosphate. It functions in the pathway nucleotide-sugar biosynthesis; ADP-L-glycero-beta-D-manno-heptose biosynthesis; ADP-L-glycero-beta-D-manno-heptose from D-glycero-beta-D-manno-heptose 7-phosphate: step 1/4. It participates in nucleotide-sugar biosynthesis; ADP-L-glycero-beta-D-manno-heptose biosynthesis; ADP-L-glycero-beta-D-manno-heptose from D-glycero-beta-D-manno-heptose 7-phosphate: step 3/4. The protein operates within bacterial outer membrane biogenesis; LPS core biosynthesis. Catalyzes the phosphorylation of D-glycero-D-manno-heptose 7-phosphate at the C-1 position to selectively form D-glycero-beta-D-manno-heptose-1,7-bisphosphate. Its function is as follows. Catalyzes the ADP transfer from ATP to D-glycero-beta-D-manno-heptose 1-phosphate, yielding ADP-D-glycero-beta-D-manno-heptose. The sequence is that of Bifunctional protein HldE from Vibrio vulnificus (strain YJ016).